Here is a 641-residue protein sequence, read N- to C-terminus: Chaperone protein DnaK (641 aa).

T201 is modified (phosphothreonine; by autocatalysis). The segment covering 604 to 622 has biased composition (low complexity); that stretch reads ASAEQGGAAPGADAGNAGK. A disordered region spans residues 604–625; the sequence is ASAEQGGAAPGADAGNAGKAQD.

This sequence belongs to the heat shock protein 70 family.

Functionally, acts as a chaperone. In Stenotrophomonas maltophilia (strain R551-3), this protein is Chaperone protein DnaK.